The sequence spans 289 residues: ATP synthase gamma chain (289 aa).

It belongs to the ATPase gamma chain family. As to quaternary structure, F-type ATPases have 2 components, CF(1) - the catalytic core - and CF(0) - the membrane proton channel. CF(1) has five subunits: alpha(3), beta(3), gamma(1), delta(1), epsilon(1). CF(0) has three main subunits: a, b and c.

The protein localises to the cell inner membrane. Its function is as follows. Produces ATP from ADP in the presence of a proton gradient across the membrane. The gamma chain is believed to be important in regulating ATPase activity and the flow of protons through the CF(0) complex. In Actinobacillus succinogenes (strain ATCC 55618 / DSM 22257 / CCUG 43843 / 130Z), this protein is ATP synthase gamma chain.